Here is a 167-residue protein sequence, read N- to C-terminus: Lipoprotein signal peptidase (167 aa).

4 helical membrane passes run 8–28, 46–66, 68–88, and 101–121; these read TFLTLLLLASIDWVSKLVVLL, WGHFSFLIIPSFNEGAAFGLF, QYKIPLLIFRVCVILGLALFL, and IALTLILAGALGNVGDILLHG. Catalysis depends on residues aspartate 125 and aspartate 143. A helical transmembrane segment spans residues 139-159; sequence FNLADAFISIGTLLLIGHLYF.

The protein belongs to the peptidase A8 family.

The protein resides in the cell inner membrane. It carries out the reaction Release of signal peptides from bacterial membrane prolipoproteins. Hydrolyzes -Xaa-Yaa-Zaa-|-(S,diacylglyceryl)Cys-, in which Xaa is hydrophobic (preferably Leu), and Yaa (Ala or Ser) and Zaa (Gly or Ala) have small, neutral side chains.. The protein operates within protein modification; lipoprotein biosynthesis (signal peptide cleavage). This protein specifically catalyzes the removal of signal peptides from prolipoproteins. The polypeptide is Lipoprotein signal peptidase (Chlamydia trachomatis serovar L2 (strain ATCC VR-902B / DSM 19102 / 434/Bu)).